Reading from the N-terminus, the 230-residue chain is Demethylmenaquinone methyltransferase (230 aa).

Residues T57, D77, and D101 to I102 each bind S-adenosyl-L-methionine.

Belongs to the class I-like SAM-binding methyltransferase superfamily. MenG/UbiE family.

It carries out the reaction a 2-demethylmenaquinol + S-adenosyl-L-methionine = a menaquinol + S-adenosyl-L-homocysteine + H(+). Its pathway is quinol/quinone metabolism; menaquinone biosynthesis; menaquinol from 1,4-dihydroxy-2-naphthoate: step 2/2. In terms of biological role, methyltransferase required for the conversion of demethylmenaquinol (DMKH2) to menaquinol (MKH2). This Chlamydia pneumoniae (Chlamydophila pneumoniae) protein is Demethylmenaquinone methyltransferase.